A 286-amino-acid polypeptide reads, in one-letter code: 3-methyl-2-oxobutanoate hydroxymethyltransferase (286 aa).

Asp-51 and Asp-90 together coordinate Mg(2+). 3-methyl-2-oxobutanoate contacts are provided by residues 51-52 (DS), Asp-90, and Lys-120. Residue Glu-122 coordinates Mg(2+). The active-site Proton acceptor is Glu-189. The tract at residues 263–286 (TFPGPSHVFSGSKASSDLNGGDES) is disordered.

Belongs to the PanB family. As to quaternary structure, homodecamer; pentamer of dimers. Mg(2+) is required as a cofactor.

The protein localises to the cytoplasm. The enzyme catalyses 3-methyl-2-oxobutanoate + (6R)-5,10-methylene-5,6,7,8-tetrahydrofolate + H2O = 2-dehydropantoate + (6S)-5,6,7,8-tetrahydrofolate. It functions in the pathway cofactor biosynthesis; (R)-pantothenate biosynthesis; (R)-pantoate from 3-methyl-2-oxobutanoate: step 1/2. Catalyzes the reversible reaction in which hydroxymethyl group from 5,10-methylenetetrahydrofolate is transferred onto alpha-ketoisovalerate to form ketopantoate. The chain is 3-methyl-2-oxobutanoate hydroxymethyltransferase from Mesorhizobium japonicum (strain LMG 29417 / CECT 9101 / MAFF 303099) (Mesorhizobium loti (strain MAFF 303099)).